We begin with the raw amino-acid sequence, 232 residues long: uncharacterized protein (232 aa).

The helical transmembrane segment at 10–32 (GLTIYLYPVIAWIILVTKIESGL) threads the bilayer.

It localises to the membrane. This is an uncharacterized protein from Archaeoglobus fulgidus (strain ATCC 49558 / DSM 4304 / JCM 9628 / NBRC 100126 / VC-16).